A 480-amino-acid chain; its full sequence is Ribulose bisphosphate carboxylase large chain (480 aa).

A propeptide spanning residues 1 to 2 (MS) is cleaved from the precursor. Pro-3 carries the post-translational modification N-acetylproline. At Lys-14 the chain carries N6,N6,N6-trimethyllysine. Residues Asn-123 and Thr-173 each coordinate substrate. Catalysis depends on Lys-175, which acts as the Proton acceptor. Lys-177 is a binding site for substrate. Mg(2+) contacts are provided by Lys-201, Asp-203, and Glu-204. Lys-201 is subject to N6-carboxylysine. The active-site Proton acceptor is His-294. Residues Arg-295, His-327, and Ser-379 each contribute to the substrate site.

This sequence belongs to the RuBisCO large chain family. Type I subfamily. In terms of assembly, heterohexadecamer of 8 large chains and 8 small chains; disulfide-linked. The disulfide link is formed within the large subunit homodimers. Mg(2+) is required as a cofactor. In terms of processing, the disulfide bond which can form in the large chain dimeric partners within the hexadecamer appears to be associated with oxidative stress and protein turnover.

Its subcellular location is the plastid. The protein resides in the chloroplast. The enzyme catalyses 2 (2R)-3-phosphoglycerate + 2 H(+) = D-ribulose 1,5-bisphosphate + CO2 + H2O. The catalysed reaction is D-ribulose 1,5-bisphosphate + O2 = 2-phosphoglycolate + (2R)-3-phosphoglycerate + 2 H(+). In terms of biological role, ruBisCO catalyzes two reactions: the carboxylation of D-ribulose 1,5-bisphosphate, the primary event in carbon dioxide fixation, as well as the oxidative fragmentation of the pentose substrate in the photorespiration process. Both reactions occur simultaneously and in competition at the same active site. This is Ribulose bisphosphate carboxylase large chain from Gossypium barbadense (Sea Island cotton).